A 725-amino-acid chain; its full sequence is NAD(+) hydrolase SARM1 (725 aa).

A mitochondrion-targeting transit peptide spans 1 to 27; sequence MVLTILFSAYKLCRFFAMSSPRPGAER. Residues 60 to 100 form an ARM 1 repeat; it reads EVQGALERALPELQQALSALKQAGGGRAVGAGLAEVFQLVE. Residues Trp-103, Arg-110, 149 to 158, and 191 to 194 each bind NAD(+); these read EQILVAENRR and HMFK. 7 ARM repeats span residues 114–153, 155–194, 197–236, 238–281, 282–315, 316–355, and 360–403; these read QGLC…QILV, ENRR…HMFK, EETC…NCAM, GGQA…LATN, KEVE…CLVD, ASDT…AEAV, and KNRN…EEVP. 2 consecutive SAM domains span residues 413–477 and 483–549; these read WKEA…LKTF and CDRS…MLHS. Ser-549 and Ser-559 each carry phosphoserine. In terms of domain architecture, TIR spans 561 to 704; it reads DVPDVFISYR…KIIRFLQGRS (144 aa). NAD(+) contacts are provided by residues 570–571 and Glu-600; that span reads RR. The active site involves Glu-643. Positions 705–725 are disordered; sequence SRDSSAGSDTSLEGAAPMGPT.

It belongs to the SARM1 family. As to quaternary structure, homooctamer; forms an octameric ring via SAM domains. Interacts with TICAM1/TRIF and thereby interferes with TICAM1/TRIF function. Interacts with MAPK10/JNK3 and SDC2 (via cytoplasmic domain). Phosphorylation at Ser-549 by JNK kinases (MAPK8, MAPK9 and /or MAPK10) enhance the NAD(+) hydrolase (NADase) activity. Phosphorylation at Ser-549 and subsequent activation takes place in response to oxidative stress conditions and inhibits mitochondrial respiration. Highest expression seen in the spleen and the brain, followed by lung, kidney, liver and other tissues.

It is found in the cytoplasm. The protein resides in the cell projection. It localises to the axon. The protein localises to the dendrite. Its subcellular location is the synapse. It is found in the mitochondrion. The catalysed reaction is NAD(+) + H2O = ADP-D-ribose + nicotinamide + H(+). The enzyme catalyses NAD(+) = cyclic ADP-beta-D-ribose + nicotinamide + H(+). It carries out the reaction NADP(+) + H2O = ADP-D-ribose 2'-phosphate + nicotinamide + H(+). Its activity is regulated as follows. Autoinhibited: in the inactive state, the enzymatic TIR domain is held apart by the autoinhibiting ARM repeats. NAD(+)-binding to ARM repeats maintains an inactive state by promoting interaction between ARM repeats and the TIR domain, thereby facilitating inhibition of the enzymatic TIR domain. Following activation, possibly by nicotinamide mononucleotide (NMN), auto-inhibitory interactions are released, allowing self-association of the TIR domains and subsequent activation of the NAD(+) hydrolase (NADase) activity. Self-association of TIR domains is facilitated by the octamer of SAM domains. NAD(+) hydrolase, which plays a key role in axonal degeneration following injury by regulating NAD(+) metabolism. Acts as a negative regulator of MYD88- and TRIF-dependent toll-like receptor signaling pathway by promoting Wallerian degeneration, an injury-induced form of programmed subcellular death which involves degeneration of an axon distal to the injury site. Wallerian degeneration is triggered by NAD(+) depletion: in response to injury, SARM1 is activated and catalyzes cleavage of NAD(+) into ADP-D-ribose (ADPR), cyclic ADPR (cADPR) and nicotinamide; NAD(+) cleavage promoting cytoskeletal degradation and axon destruction. Also able to hydrolyze NADP(+), but not other NAD(+)-related molecules. Can activate neuronal cell death in response to stress. Regulates dendritic arborization through the MAPK4-JNK pathway. Involved in innate immune response: inhibits both TICAM1/TRIF- and MYD88-dependent activation of JUN/AP-1, TRIF-dependent activation of NF-kappa-B and IRF3, and the phosphorylation of MAPK14/p38. The sequence is that of NAD(+) hydrolase SARM1 from Sus scrofa (Pig).